The primary structure comprises 447 residues: NADH-quinone oxidoreductase subunit F (447 aa).

61–70 (GRGGAGFSTG) is a binding site for NAD(+). 174 to 221 (GAGRYICGEETALINSLEGRRANPRAKPPFPAVFGLWGKPTCVNNVET) contributes to the FMN binding site. Residues cysteine 352, cysteine 355, cysteine 358, and cysteine 399 each coordinate [4Fe-4S] cluster.

This sequence belongs to the complex I 51 kDa subunit family. In terms of assembly, composed of 13 different subunits. Subunits NuoCD, E, F, and G constitute the peripheral sector of the complex. Requires [4Fe-4S] cluster as cofactor. The cofactor is FMN.

It catalyses the reaction a quinone + NADH + 5 H(+)(in) = a quinol + NAD(+) + 4 H(+)(out). In terms of biological role, NDH-1 shuttles electrons from NADH, via FMN and iron-sulfur (Fe-S) centers, to quinones in the respiratory chain. Couples the redox reaction to proton translocation (for every two electrons transferred, four hydrogen ions are translocated across the cytoplasmic membrane), and thus conserves the redox energy in a proton gradient. The polypeptide is NADH-quinone oxidoreductase subunit F (nuoF) (Buchnera aphidicola subsp. Schizaphis graminum (strain Sg)).